We begin with the raw amino-acid sequence, 129 residues long: NADH-quinone oxidoreductase subunit A (129 aa).

3 helical membrane-spanning segments follow: residues 14–34 (LAIHVALSAGIVAAIIVVAAW), 67–87 (FLIAALFVIFDMEAAILFAWA), and 95–115 (WLGLIEAAVFIGVLLLALVYL).

It belongs to the complex I subunit 3 family. NDH-1 is composed of 14 different subunits. Subunits NuoA, H, J, K, L, M, N constitute the membrane sector of the complex.

It is found in the cell inner membrane. The enzyme catalyses a quinone + NADH + 5 H(+)(in) = a quinol + NAD(+) + 4 H(+)(out). In terms of biological role, NDH-1 shuttles electrons from NADH, via FMN and iron-sulfur (Fe-S) centers, to quinones in the respiratory chain. The immediate electron acceptor for the enzyme in this species is believed to be ubiquinone. Couples the redox reaction to proton translocation (for every two electrons transferred, four hydrogen ions are translocated across the cytoplasmic membrane), and thus conserves the redox energy in a proton gradient. The chain is NADH-quinone oxidoreductase subunit A from Rhodopseudomonas palustris (strain ATCC BAA-98 / CGA009).